Here is a 224-residue protein sequence, read N- to C-terminus: ATP-dependent Clp protease proteolytic subunit 1 (224 aa).

The Nucleophile role is filled by Ser120. His145 is an active-site residue.

This sequence belongs to the peptidase S14 family. As to quaternary structure, fourteen ClpP subunits assemble into 2 heptameric rings which stack back to back to give a disk-like structure with a central cavity, resembling the structure of eukaryotic proteasomes.

It localises to the cytoplasm. It carries out the reaction Hydrolysis of proteins to small peptides in the presence of ATP and magnesium. alpha-casein is the usual test substrate. In the absence of ATP, only oligopeptides shorter than five residues are hydrolyzed (such as succinyl-Leu-Tyr-|-NHMec, and Leu-Tyr-Leu-|-Tyr-Trp, in which cleavage of the -Tyr-|-Leu- and -Tyr-|-Trp bonds also occurs).. In terms of biological role, cleaves peptides in various proteins in a process that requires ATP hydrolysis. Has a chymotrypsin-like activity. Plays a major role in the degradation of misfolded proteins. In Prochlorococcus marinus (strain MIT 9313), this protein is ATP-dependent Clp protease proteolytic subunit 1.